The primary structure comprises 243 residues: Probable HTH-type transcriptional regulator GfsR (243 aa).

The interval 154–179 is disordered; sequence AAVARPDTSGSATGRTGDSSPSLALS. The segment covering 161 to 178 has biased composition (polar residues); sequence TSGSATGRTGDSSPSLAL. Residues 171–236 form the HTH luxR-type domain; the sequence is DSSPSLALSP…QALLRWLGHP (66 aa). A DNA-binding region (H-T-H motif) is located at residues 195–214; that stretch reads VREIAVEMRLAEKTVRNYLS.

The protein operates within antibiotic biosynthesis. Its function is as follows. Probable DNA-binding protein that contributes to the control of expression of the biosynthesis operon of the 16-membered macrolide antibiotics FD-891 and FD-892. Might be a member of a two-component regulatory system; the putative sensor kinase gene is unknown. The protein is Probable HTH-type transcriptional regulator GfsR of Streptomyces halstedii.